The sequence spans 655 residues: Inactive serine protease scarface (655 aa).

Residues 1–24 form the signal peptide; the sequence is MSASHFREQLALCITLAVLAAASG. Polar residues-rich tracts occupy residues 213–225 and 237–252; these read TQAPFRPQPTTAV and PSTTQHPSYEKVQTSR. Positions 213–319 are disordered; the sequence is TQAPFRPQPT…QPSNQKPIYR (107 aa). Residues 343-407 are CLIP; that stretch reads KCASALVCTS…PNYVDPWPVN (65 aa). 7 disulfide bridges follow: C344–C394, C350–C383, C356–C395, C450–C466, C547–C605, C579–C587, and C595–C623. Residues 421 to 644 enclose the Peptidase S1 domain; sequence PTGVKDLDAN…DIKWINTAFA (224 aa).

The protein belongs to the peptidase S1 family.

It is found in the secreted. In terms of biological role, inactive serine protease that plays a role in germ-band retraction and dorsal closure morphogenesis in embryogenesis; contributes to amnioserosa attachment and epithelial apico-basal polarity by regulating the localization of laminin LanA on the apical side of the amnioserosa epithelium. Contributes to epithelial morphogenesis probably by regulating the bsk/JNK pathway, as part of a negative-feedback loop, and by modulating the cross-talk between the Egfr, bsk/JNK and dpp signal transduction pathways. In larval development, antagonizes the morphogenetic movements controlled by the bsk/JNK signaling including male genitalia formation and thorax development. The chain is Inactive serine protease scarface from Drosophila melanogaster (Fruit fly).